The following is a 321-amino-acid chain: Transmembrane protein 255A (321 aa).

Transmembrane regions (helical) follow at residues 29–49 (VFVT…GMAA), 56–76 (VTVG…LGII), 88–108 (LVAS…CAIV), and 200–220 (TILN…LGGF). Residues 279–297 (STPSGLSDDPNGQASSFMW) are compositionally biased toward polar residues. The interval 279–300 (STPSGLSDDPNGQASSFMWPSN) is disordered.

It belongs to the TMEM255 family.

It is found in the membrane. This is Transmembrane protein 255A (tmem255a) from Xenopus laevis (African clawed frog).